Here is a 155-residue protein sequence, read N- to C-terminus: 6,7-dimethyl-8-ribityllumazine synthase (155 aa).

5-amino-6-(D-ribitylamino)uracil-binding positions include Phe23, 57-59 (AFE), and 81-83 (AVI). 86–87 (ST) contributes to the (2S)-2-hydroxy-3-oxobutyl phosphate binding site. The active-site Proton donor is the His89. Phe114 is a 5-amino-6-(D-ribitylamino)uracil binding site. Arg128 is a binding site for (2S)-2-hydroxy-3-oxobutyl phosphate.

Belongs to the DMRL synthase family.

It carries out the reaction (2S)-2-hydroxy-3-oxobutyl phosphate + 5-amino-6-(D-ribitylamino)uracil = 6,7-dimethyl-8-(1-D-ribityl)lumazine + phosphate + 2 H2O + H(+). It participates in cofactor biosynthesis; riboflavin biosynthesis; riboflavin from 2-hydroxy-3-oxobutyl phosphate and 5-amino-6-(D-ribitylamino)uracil: step 1/2. Functionally, catalyzes the formation of 6,7-dimethyl-8-ribityllumazine by condensation of 5-amino-6-(D-ribitylamino)uracil with 3,4-dihydroxy-2-butanone 4-phosphate. This is the penultimate step in the biosynthesis of riboflavin. The sequence is that of 6,7-dimethyl-8-ribityllumazine synthase from Desulfatibacillum aliphaticivorans.